A 487-amino-acid polypeptide reads, in one-letter code: Bifunctional cytokinin biosynthesis protein (487 aa).

Residues 1–266 (MESTNRFMIG…RMASDFCYAS (266 aa)) are adenylate isopentenyltransferase. The interval 267 to 487 (TSISFHPINE…FSRKGELEWV (221 aa)) is cytokinin riboside 5'-monophosphate phosphoribohydrolase. Substrate is bound by residues glutamate 352, 380–381 (RK), 403–409 (GYGTLEE), and threonine 415.

This sequence in the N-terminal section; belongs to the IPP transferase family. In the C-terminal section; belongs to the LOG family.

It catalyses the reaction dimethylallyl diphosphate + AMP = N(6)-(dimethylallyl)adenosine 5'-phosphate + diphosphate. The enzyme catalyses N(6)-(dimethylallyl)adenosine 5'-phosphate + H2O = N(6)-dimethylallyladenine + D-ribose 5-phosphate. The catalysed reaction is 9-ribosyl-trans-zeatin 5'-phosphate + H2O = trans-zeatin + D-ribose 5-phosphate. It functions in the pathway secondary metabolite biosynthesis. Its function is as follows. Bifunctional cytokinin synthesis protein; part of the gene cluster that mediates the biosynthesis of cytokinins such as fusatin, fusatinic acids or 8-oxofusatin, known for their growth promoting and anti-senescence activities toward host plants. FCK1 is a bifunctional enzyme that performs the first steps in the biosynthesis of Fusarium cytokinins. It first condenses adenosine monophosphate (AMP) with dimethylallyl diphosphate (DMAPP) to yield isoprenyl adenosine monophosphate. It then catalyzes the removal of the phosphoribose to produce isopentenylaldehyde. The cytochrome P450 monooxygenase then converts isopentenylaldehyde to trans-zeatin. A condensation step converts trans-zeatin to fusatin which is further modified to produce fusatinic acid. The mechanism for oxidation of fusatin to fusatinic acid remains unknown. 8-oxofusatin could be produced through several pathways, via direct oxygenation of fusatin, or via the 8-oxo-pentenyladenine intermediate which itself must arise from either the prenylation of 8-oxo-AMP by FCK1 and/or oxygenation of isopentenylaldehyde. Both the FCK3 and FCK4 enzymes act downstream of the identified cytokinins to produce yet unidentified compounds. This chain is Bifunctional cytokinin biosynthesis protein, found in Fusarium pseudograminearum (strain CS3096) (Wheat and barley crown-rot fungus).